We begin with the raw amino-acid sequence, 71 residues long: Phosphatidylinositol N-acetylglucosaminyltransferase subunit Y (71 aa).

Over 1-3 the chain is Cytoplasmic; that stretch reads MFL. A helical transmembrane segment spans residues 4–26; the sequence is SLPTLTVLIPLVSLAGLFYSASV. At 27–44 the chain is on the lumenal side; that stretch reads EENFPQGCTSTASLCFYS. Residues 45 to 65 traverse the membrane as a helical segment; the sequence is LLLPITIPVYVFFHLWTWMGI. Residues 66 to 71 lie on the Cytoplasmic side of the membrane; it reads KLFRHN.

In terms of assembly, component of the glycosylphosphatidylinositol-N-acetylglucosaminyltransferase (GPI-GnT) complex composed at least by PIGA, PIGC, PIGH, PIGP, PIGQ, PIGY and DPM2. Interacts directly with PIGA; this interaction regulates glycosylphosphatidylinositol-N-acetylglucosaminyltransferase activity. Does not interact with Ras proteins.

Its subcellular location is the endoplasmic reticulum membrane. It participates in glycolipid biosynthesis; glycosylphosphatidylinositol-anchor biosynthesis. In terms of biological role, part of the glycosylphosphatidylinositol-N-acetylglucosaminyltransferase (GPI-GnT) complex that catalyzes the transfer of N-acetylglucosamine from UDP-N-acetylglucosamine to phosphatidylinositol and participates in the first step of GPI biosynthesis. May act by regulating the catalytic subunit PIGA. This is Phosphatidylinositol N-acetylglucosaminyltransferase subunit Y from Homo sapiens (Human).